A 292-amino-acid polypeptide reads, in one-letter code: DSC E3 ubiquitin ligase complex subunit 3 (292 aa).

Topologically, residues 1-243 are extracellular; the sequence is MSAEPLLPTH…PIANIKHNKD (243 aa). Residues Asn11, Asn41, Asn77, Asn99, and Asn145 are each glycosylated (N-linked (GlcNAc...) asparagine). The helical transmembrane segment at 244-264 threads the bilayer; the sequence is LLLGICVGFFFGVFGILLMKF. Over 265–273 the chain is Cytoplasmic; the sequence is DGLFNRRQK. The helical transmembrane segment at 274–291 threads the bilayer; that stretch reads MAIFAGVIVNVMFCLVRG. Position 292 (Phe292) is a topological domain, extracellular.

The protein belongs to the dsc3 family. In terms of assembly, component of the DSC E3 ligase complexes composed of at least TUL1, DSC2, DSC3, UBX3, CDC48 as well as VLD1 for the vacuole-localized complex or GLD1 for the Golgi/endosome-localized complex.

It is found in the endoplasmic reticulum membrane. Component of the DSC E3 ubiquitin ligase complexes that tag proteins present in Golgi, endosome and vacuole membranes and function in protein homeostasis under non-stress conditions and support a role in protein quality control. Involved in endocytic protein trafficking. The protein is DSC E3 ubiquitin ligase complex subunit 3 of Saccharomyces cerevisiae (strain ATCC 204508 / S288c) (Baker's yeast).